The sequence spans 275 residues: Dermonecrotic toxin LhSicTox-alphaIV2 (275 aa).

Residue His-5 is part of the active site. Glu-25 and Asp-27 together coordinate Mg(2+). The Nucleophile role is filled by His-41. 2 cysteine pairs are disulfide-bonded: Cys-45-Cys-51 and Cys-47-Cys-192. Asp-85 is a Mg(2+) binding site.

The protein belongs to the arthropod phospholipase D family. Class II subfamily. The cofactor is Mg(2+). Expressed by the venom gland.

It localises to the secreted. The enzyme catalyses an N-(acyl)-sphingosylphosphocholine = an N-(acyl)-sphingosyl-1,3-cyclic phosphate + choline. It carries out the reaction an N-(acyl)-sphingosylphosphoethanolamine = an N-(acyl)-sphingosyl-1,3-cyclic phosphate + ethanolamine. The catalysed reaction is a 1-acyl-sn-glycero-3-phosphocholine = a 1-acyl-sn-glycero-2,3-cyclic phosphate + choline. It catalyses the reaction a 1-acyl-sn-glycero-3-phosphoethanolamine = a 1-acyl-sn-glycero-2,3-cyclic phosphate + ethanolamine. In terms of biological role, dermonecrotic toxins cleave the phosphodiester linkage between the phosphate and headgroup of certain phospholipids (sphingolipid and lysolipid substrates), forming an alcohol (often choline) and a cyclic phosphate. This toxin acts on sphingomyelin (SM). It may also act on ceramide phosphoethanolamine (CPE), lysophosphatidylcholine (LPC) and lysophosphatidylethanolamine (LPE), but not on lysophosphatidylserine (LPS), and lysophosphatidylglycerol (LPG). It acts by transphosphatidylation, releasing exclusively cyclic phosphate products as second products. Induces dermonecrosis, hemolysis, increased vascular permeability, edema, inflammatory response, and platelet aggregation. The sequence is that of Dermonecrotic toxin LhSicTox-alphaIV2 from Loxosceles hirsuta (Recluse spider).